Consider the following 766-residue polypeptide: Phosphoribosylformylglycinamidine synthase subunit PurL (766 aa).

H49 is an active-site residue. The ATP site is built by Y52 and K91. E93 provides a ligand contact to Mg(2+). Substrate contacts are provided by residues 94–97 (SHNH) and R116. Residue H95 is the Proton acceptor of the active site. D117 is a binding site for Mg(2+). Q240 contacts substrate. D268 serves as a coordination point for Mg(2+). 312–314 (ESQ) contributes to the substrate binding site. Residues D508 and G545 each coordinate ATP. N546 contributes to the Mg(2+) binding site. S548 is a substrate binding site.

The protein belongs to the FGAMS family. Monomer. Part of the FGAM synthase complex composed of 1 PurL, 1 PurQ and 2 PurS subunits.

The protein resides in the cytoplasm. It catalyses the reaction N(2)-formyl-N(1)-(5-phospho-beta-D-ribosyl)glycinamide + L-glutamine + ATP + H2O = 2-formamido-N(1)-(5-O-phospho-beta-D-ribosyl)acetamidine + L-glutamate + ADP + phosphate + H(+). The protein operates within purine metabolism; IMP biosynthesis via de novo pathway; 5-amino-1-(5-phospho-D-ribosyl)imidazole from N(2)-formyl-N(1)-(5-phospho-D-ribosyl)glycinamide: step 1/2. Functionally, part of the phosphoribosylformylglycinamidine synthase complex involved in the purines biosynthetic pathway. Catalyzes the ATP-dependent conversion of formylglycinamide ribonucleotide (FGAR) and glutamine to yield formylglycinamidine ribonucleotide (FGAM) and glutamate. The FGAM synthase complex is composed of three subunits. PurQ produces an ammonia molecule by converting glutamine to glutamate. PurL transfers the ammonia molecule to FGAR to form FGAM in an ATP-dependent manner. PurS interacts with PurQ and PurL and is thought to assist in the transfer of the ammonia molecule from PurQ to PurL. The protein is Phosphoribosylformylglycinamidine synthase subunit PurL of Synechococcus sp. (strain CC9902).